The sequence spans 623 residues: 1-butanol dehydrogenase (quinone) (623 aa).

The signal sequence occupies residues 1–28 (MKKSHAKPFALRAIVVATAAALSLPAAA). Residues Asp40, Thr43, and Asp46 each coordinate Ca(2+). A pyrroloquinoline quinone-binding site is contributed by Glu90. Cysteines 134 and 135 form a disulfide. Residues Arg140, Thr184, and 202-204 (HGS) contribute to the pyrroloquinoline quinone site. Glu208 contributes to the Ca(2+) binding site. The disordered stretch occupies residues 235 to 274 (HMGRLNGKDSTPTGDPKAPSWPDDPNSPTGKVEAWSQGGG). 2 residues coordinate Ca(2+): Asn295 and Asp345. The Proton acceptor role is filled by Asp345. Position 374 (Arg374) interacts with pyrroloquinoline quinone. The interval 420–440 (GKPIEKDNRPPQPKEGADKGE) is disordered. Ala592 is a pyrroloquinoline quinone binding site.

It belongs to the bacterial PQQ dehydrogenase family. Pyrroloquinoline quinone is required as a cofactor. Requires Ca(2+) as cofactor.

Its subcellular location is the periplasm. It carries out the reaction butan-1-ol + a quinone = butanal + a quinol. In terms of biological role, involved in the metabolism of butane. May function primarily in energy generation. Catalyzes the oxidation of 1-butanol to 1-butanal. Also able to use 2-butanol and butyraldehyde, although the affinity is comparatively low. The polypeptide is 1-butanol dehydrogenase (quinone) (Thauera butanivorans (strain ATCC 43655 / DSM 2080 / JCM 20651 / CCUG 51053 / NBRC 103042 / IAM 12574 / Bu B1211) (Pseudomonas butanovora)).